The sequence spans 123 residues: Small ribosomal subunit protein bS16 (123 aa).

The tract at residues 87–123 (VKNNPVKAKPGKRAQERAAEKAQKVADAAAAAADAAE) is disordered. A compositionally biased stretch (basic and acidic residues) spans 99–110 (RAQERAAEKAQK). Over residues 111–123 (VADAAAAAADAAE) the composition is skewed to low complexity.

It belongs to the bacterial ribosomal protein bS16 family.

In Rhizobium johnstonii (strain DSM 114642 / LMG 32736 / 3841) (Rhizobium leguminosarum bv. viciae), this protein is Small ribosomal subunit protein bS16.